The sequence spans 251 residues: Imidazole glycerol phosphate synthase subunit HisF (251 aa).

Catalysis depends on residues D11 and D130.

The protein belongs to the HisA/HisF family. Heterodimer of HisH and HisF.

The protein resides in the cytoplasm. The enzyme catalyses 5-[(5-phospho-1-deoxy-D-ribulos-1-ylimino)methylamino]-1-(5-phospho-beta-D-ribosyl)imidazole-4-carboxamide + L-glutamine = D-erythro-1-(imidazol-4-yl)glycerol 3-phosphate + 5-amino-1-(5-phospho-beta-D-ribosyl)imidazole-4-carboxamide + L-glutamate + H(+). It participates in amino-acid biosynthesis; L-histidine biosynthesis; L-histidine from 5-phospho-alpha-D-ribose 1-diphosphate: step 5/9. IGPS catalyzes the conversion of PRFAR and glutamine to IGP, AICAR and glutamate. The HisF subunit catalyzes the cyclization activity that produces IGP and AICAR from PRFAR using the ammonia provided by the HisH subunit. The protein is Imidazole glycerol phosphate synthase subunit HisF of Streptococcus mutans serotype c (strain ATCC 700610 / UA159).